The primary structure comprises 162 residues: NADH-quinone oxidoreductase subunit I 1 (162 aa).

4Fe-4S ferredoxin-type domains lie at Leu52–Gly82 and Val93–Asn122. Residues Cys62, Cys65, Cys68, Cys72, Cys102, Cys105, Cys108, and Cys112 each coordinate [4Fe-4S] cluster.

It belongs to the complex I 23 kDa subunit family. NDH-1 is composed of 14 different subunits. Subunits NuoA, H, J, K, L, M, N constitute the membrane sector of the complex. Requires [4Fe-4S] cluster as cofactor.

The protein resides in the cell inner membrane. The enzyme catalyses a quinone + NADH + 5 H(+)(in) = a quinol + NAD(+) + 4 H(+)(out). Its function is as follows. NDH-1 shuttles electrons from NADH, via FMN and iron-sulfur (Fe-S) centers, to quinones in the respiratory chain. The immediate electron acceptor for the enzyme in this species is believed to be ubiquinone. Couples the redox reaction to proton translocation (for every two electrons transferred, four hydrogen ions are translocated across the cytoplasmic membrane), and thus conserves the redox energy in a proton gradient. The chain is NADH-quinone oxidoreductase subunit I 1 from Rhodopseudomonas palustris (strain ATCC BAA-98 / CGA009).